We begin with the raw amino-acid sequence, 539 residues long: MYNDEVRTPQALKNRYITNVNGLKCRARRNSHSNSSNSSAASATPTNGGKENGKYSPQMSGNVCTPPPKRLHKVRNPFEGAMADRLHLPLIASPSLFRSRTPQLSSTQFEWNIDEVSQLKPADVEPHETQFHDSPDPEQESKAQLAISAFFKESLIVPSPVDCPLRKQRIILNCSEDNTPISNKSRRMRDCEVQTELTLPPILPKALEDALRPYFQPHLAGRLSGRSKSSGGPDIFNSSMRRKLFDLHNVIVLGEQDTAEPSRSMVGSSPQGKQTMFAGRLSDSASGESSFGCLSPIRNLCGLPPGTPDNGTCSGKRKLLMHELELPSPIAPSEHLSRRLVHSKVEISVTEQHDTLSERTALKFTPDRSSSPMGGGLEHSDCSINQRVRRLRVNSTRQVVIETGDQPLFEETEGEEEEAESEDDEEADAMQLSTVSFNCSSSNSDTPRGHKRHRSAQRKNLSQSFSANLEEEADQTQGGAGSIQPAEPPSVAMPQQGARIPLYRADSGFNETSSTTFAFSQDLPLDVSMACCSTPSTRS.

A disordered region spans residues 23-70 (LKCRARRNSHSNSSNSSAASATPTNGGKENGKYSPQMSGNVCTPPPKR). Low complexity predominate over residues 32-43 (HSNSSNSSAASA). Positions 44-63 (TPTNGGKENGKYSPQMSGNV) are enriched in polar residues. Residue Ser383 is modified to Phosphoserine. The interval 398-499 (QVVIETGDQP…SVAMPQQGAR (102 aa)) is disordered. Residues 408–428 (LFEETEGEEEEAESEDDEEAD) show a composition bias toward acidic residues. Residues 433-444 (STVSFNCSSSNS) show a composition bias toward low complexity. Positions 458-467 (RKNLSQSFSA) are enriched in polar residues.

This sequence belongs to the BORA family. In terms of assembly, interacts with aur. Phosphorylated by aur.

The protein localises to the cytoplasm. Its subcellular location is the nucleus. Its function is as follows. Required for the activation of Aurora-A (aur) at the onset of mitosis. This chain is Protein aurora borealis (bora), found in Drosophila melanogaster (Fruit fly).